We begin with the raw amino-acid sequence, 377 residues long: Anhydro-N-acetylmuramic acid kinase (377 aa).

An ATP-binding site is contributed by 18-25 (GTSADGID).

Belongs to the anhydro-N-acetylmuramic acid kinase family.

It catalyses the reaction 1,6-anhydro-N-acetyl-beta-muramate + ATP + H2O = N-acetyl-D-muramate 6-phosphate + ADP + H(+). The protein operates within amino-sugar metabolism; 1,6-anhydro-N-acetylmuramate degradation. It participates in cell wall biogenesis; peptidoglycan recycling. Its function is as follows. Catalyzes the specific phosphorylation of 1,6-anhydro-N-acetylmuramic acid (anhMurNAc) with the simultaneous cleavage of the 1,6-anhydro ring, generating MurNAc-6-P. Is required for the utilization of anhMurNAc either imported from the medium or derived from its own cell wall murein, and thus plays a role in cell wall recycling. The chain is Anhydro-N-acetylmuramic acid kinase from Xanthomonas campestris pv. campestris (strain 8004).